The primary structure comprises 199 residues: MFVTFEGIDGSGKTAQLTAAGEFLKASGKQVVLTREPGTISCIRDYVLASDMDIRTEALLYSADRAENIAKNVIPALNAGKVVLQDRYLDSFLAYQLADNKLVETDIMRLFEFSSQGLRPDLTLLFDLTPACAQERLENRDRIERKPIDFHSKVRNIYLKLSADNTDRIRVIDASQSFSKIHQQVIYHIERKLGGTHSA.

An ATP-binding site is contributed by 7–14 (GIDGSGKT).

It belongs to the thymidylate kinase family.

It catalyses the reaction dTMP + ATP = dTDP + ADP. Functionally, phosphorylation of dTMP to form dTDP in both de novo and salvage pathways of dTTP synthesis. In Tropheryma whipplei (strain Twist) (Whipple's bacillus), this protein is Thymidylate kinase.